Here is a 1199-residue protein sequence, read N- to C-terminus: DNA-directed RNA polymerase subunit beta' (1199 aa).

Zn(2+) contacts are provided by C60, C62, C75, and C78. Residues D449, D451, and D453 each coordinate Mg(2+). Zn(2+) is bound by residues C818, C892, C899, and C902.

The protein belongs to the RNA polymerase beta' chain family. As to quaternary structure, RNAP is composed of a core of 2 alpha, a beta and a beta' subunit. The core is associated with a delta subunit, and at least one of epsilon or omega. When a sigma factor is associated with the core the holoenzyme is formed, which can initiate transcription. Mg(2+) is required as a cofactor. Zn(2+) serves as cofactor.

The catalysed reaction is RNA(n) + a ribonucleoside 5'-triphosphate = RNA(n+1) + diphosphate. In terms of biological role, DNA-dependent RNA polymerase catalyzes the transcription of DNA into RNA using the four ribonucleoside triphosphates as substrates. This Bacillus subtilis (strain 168) protein is DNA-directed RNA polymerase subunit beta'.